We begin with the raw amino-acid sequence, 694 residues long: Two-component response regulator ORR25 (694 aa).

One can recognise a Response regulatory domain in the interval 17–132 (RVLAVDDSPV…DIQNIWQHVW (116 aa)). Asp-68 carries the post-translational modification 4-aspartylphosphate. Positions 183–242 (TLKRQRVVWTPELHRDFVIAVHELGVDRAVPRKILRMMKVDYMTRENIASHLQKYRLYLK) constitute an HTH myb-type domain. The segment at residues 213–238 (PRKILRMMKVDYMTRENIASHLQKYR) is a DNA-binding region (H-T-H motif). A disordered region spans residues 326–349 (VGHGGSPGNNPVFQPLQNSSNARK). Over residues 333–347 (GNNPVFQPLQNSSNA) the composition is skewed to polar residues.

This sequence belongs to the ARR family. Type-B subfamily. In terms of processing, two-component system major event consists of a His-to-Asp phosphorelay between a sensor histidine kinase (HK) and a response regulator (RR). In plants, the His-to-Asp phosphorelay involves an additional intermediate named Histidine-containing phosphotransfer protein (HPt). This multistep phosphorelay consists of a His-Asp-His-Asp sequential transfer of a phosphate group between first a His and an Asp of the HK protein, followed by the transfer to a conserved His of the HPt protein and finally the transfer to an Asp in the receiver domain of the RR protein.

Its subcellular location is the nucleus. In terms of biological role, transcriptional activator that binds specific DNA sequence. Functions as a response regulator involved in His-to-Asp phosphorelay signal transduction system. Phosphorylation of the Asp residue in the receiver domain activates the ability of the protein to promote the transcription of target genes. May directly activate some type-A response regulators in response to cytokinins. The polypeptide is Two-component response regulator ORR25 (Oryza sativa subsp. japonica (Rice)).